A 276-amino-acid polypeptide reads, in one-letter code: Expansin-like A3 (276 aa).

Positions 1–28 are cleaved as a signal peptide; sequence MAVLLSILSSSFLLLLAASSSSTPRASA. The region spanning 52 to 158 is the Expansin-like EG45 domain; it reads GGGCGYGAMA…RRIPCDYKDK (107 aa). Residues Asn115 and Asn159 are each glycosylated (N-linked (GlcNAc...) asparagine). The Expansin-like CBD domain maps to 172-255; it reads NNLVIKFLYQ…NWQPGQVYDT (84 aa).

This sequence belongs to the expansin family. Expansin-like A subfamily.

The protein localises to the secreted. The protein is Expansin-like A3 (EXLA3) of Oryza sativa subsp. japonica (Rice).